The primary structure comprises 198 residues: Glycerol-3-phosphate acyltransferase (198 aa).

A run of 5 helical transmembrane segments spans residues 10–30 (LIPI…WILV), 57–77 (GISF…ILIL), 86–106 (IMYL…WFLF), 118–138 (VVLS…AVVF), and 160–180 (AVTE…IVLI).

The protein belongs to the PlsY family. As to quaternary structure, probably interacts with PlsX.

It localises to the cell inner membrane. The enzyme catalyses an acyl phosphate + sn-glycerol 3-phosphate = a 1-acyl-sn-glycero-3-phosphate + phosphate. It functions in the pathway lipid metabolism; phospholipid metabolism. In terms of biological role, catalyzes the transfer of an acyl group from acyl-phosphate (acyl-PO(4)) to glycerol-3-phosphate (G3P) to form lysophosphatidic acid (LPA). This enzyme utilizes acyl-phosphate as fatty acyl donor, but not acyl-CoA or acyl-ACP. This Anaplasma marginale (strain Florida) protein is Glycerol-3-phosphate acyltransferase.